A 375-amino-acid chain; its full sequence is MAAIKYRLIKKDSRTNARLGILETPHGVIETPVFMPVGTQATVKAMTPEELKEIGATIILSNTYHLYLRPGHKIIEKAGGLHRFMNWDRAILTDSGGFQIFSLSSLRKIKEEGVEFRSHIDGSKHFFTPEKVIEIQNALGSDIIMSFDECAPYPADYEYVKNSMELTIKWAERGKKAHKNTEKQALFGIVQGGIYEDLRKECAQRLVEMDFPGYSIGGLSVGEPKNVMYDIVDLTTEYLPENKPRYLMGVGSPDDLIEGVIRGVDMFDCVLPTRIARNGTVFTSKGKLIVRDAPYAEDFSPLDEECDCYTCKNYSRAYIRHLFKANEILAARLATIHNLYFLIKLMERIREAIRQDRLLEFKKQFFKKYGYKEEY.

Asp-94 acts as the Proton acceptor in catalysis. Residues 94–98 (DSGGF), Asp-148, Gln-191, and Gly-218 each bind substrate. Positions 249 to 255 (GVGSPDD) are RNA binding. Residue Asp-268 is the Nucleophile of the active site. The interval 273-277 (TRIAR) is RNA binding; important for wobble base 34 recognition. The Zn(2+) site is built by Cys-306, Cys-308, Cys-311, and His-337.

The protein belongs to the queuine tRNA-ribosyltransferase family. In terms of assembly, homodimer. Within each dimer, one monomer is responsible for RNA recognition and catalysis, while the other monomer binds to the replacement base PreQ1. It depends on Zn(2+) as a cofactor.

The catalysed reaction is 7-aminomethyl-7-carbaguanine + guanosine(34) in tRNA = 7-aminomethyl-7-carbaguanosine(34) in tRNA + guanine. It functions in the pathway tRNA modification; tRNA-queuosine biosynthesis. Catalyzes the base-exchange of a guanine (G) residue with the queuine precursor 7-aminomethyl-7-deazaguanine (PreQ1) at position 34 (anticodon wobble position) in tRNAs with GU(N) anticodons (tRNA-Asp, -Asn, -His and -Tyr). Catalysis occurs through a double-displacement mechanism. The nucleophile active site attacks the C1' of nucleotide 34 to detach the guanine base from the RNA, forming a covalent enzyme-RNA intermediate. The proton acceptor active site deprotonates the incoming PreQ1, allowing a nucleophilic attack on the C1' of the ribose to form the product. After dissociation, two additional enzymatic reactions on the tRNA convert PreQ1 to queuine (Q), resulting in the hypermodified nucleoside queuosine (7-(((4,5-cis-dihydroxy-2-cyclopenten-1-yl)amino)methyl)-7-deazaguanosine). The chain is Queuine tRNA-ribosyltransferase from Thermoanaerobacter sp. (strain X514).